Consider the following 75-residue polypeptide: Large ribosomal subunit protein bL32c (75 aa).

The segment at 49-75 is disordered; the sequence is SPGPTTPIKPNPKKQTGRRPRSQRRRT. Over residues 59–75 the composition is skewed to basic residues; sequence NPKKQTGRRPRSQRRRT.

The protein belongs to the bacterial ribosomal protein bL32 family.

It is found in the plastid. It localises to the chloroplast. The polypeptide is Large ribosomal subunit protein bL32c (Nephroselmis olivacea (Green alga)).